A 527-amino-acid chain; its full sequence is Catalase (527 aa).

The segment covering 1–22 (MADSRDPASDQMKHWKEERAAQ) has biased composition (basic and acidic residues). The disordered stretch occupies residues 1–32 (MADSRDPASDQMKHWKEERAAQKPDVLTTAGG). An N-acetylalanine modification is found at Ala2. The residue at position 9 (Ser9) is a Phosphoserine. Lys13 bears the N6-succinyllysine mark. Residues His75 and Asn148 contribute to the active site. Residues His194, Ser201, Arg203, and Asn213 each contribute to the NADP(+) site. Lys221 carries the N6-succinyllysine modification. The residue at position 233 (Lys233) is an N6-acetyllysine. Lys237, Trp303, His305, and Lys306 together coordinate NADP(+). Lys306 carries the N6-acetyllysine; alternate modification. N6-succinyllysine; alternate is present on Lys306. Tyr358 provides a ligand contact to heme. Ser434 is subject to Phosphoserine. Lys480 is modified (N6-acetyllysine; alternate). Residue Lys480 is modified to N6-succinyllysine; alternate. Lys499 carries the post-translational modification N6-acetyllysine. Thr511 is subject to Phosphothreonine. Phosphoserine is present on Ser517. An N6-succinyllysine modification is found at Lys522. The Microbody targeting signal; atypical motif lies at 524-527 (KANL).

It belongs to the catalase family. Homotetramer. Interacts (via microbody targeting signal) with PEX5, monomeric form interacts with PEX5, leading to its translocation into peroxisomes. Heme is required as a cofactor. It depends on NADP(+) as a cofactor.

It localises to the peroxisome matrix. The catalysed reaction is 2 H2O2 = O2 + 2 H2O. Functionally, catalyzes the degradation of hydrogen peroxide (H(2)O(2)) generated by peroxisomal oxidases to water and oxygen, thereby protecting cells from the toxic effects of hydrogen peroxide. Promotes growth of cells including T-cells, B-cells, myeloid leukemia cells, melanoma cells, mastocytoma cells and normal and transformed fibroblast cells. The polypeptide is Catalase (CAT) (Cavia porcellus (Guinea pig)).